The primary structure comprises 190 residues: MVKGLEKFNELVESFANLPTIGKKTAIRLAYHLCINNQIDGMKLAHNIENAIRFIKPCEQCGALSENELCEICSDEERNKNILCIVESPKDILTLEESQSYNGLYFVLDELNEEKLEKLKQIILKLNISELIFALTHSINSDATIFFIEDKFKGLNLTFSKIAQGIPSGINLENVDLISLNKAMNFRTKI.

The segment at 58–73 (CEQCGALSENELCEIC) adopts a C4-type zinc-finger fold. Positions 81–167 (NILCIVESPK…TFSKIAQGIP (87 aa)) constitute a Toprim domain.

Belongs to the RecR family.

Its function is as follows. May play a role in DNA repair. It seems to be involved in an RecBC-independent recombinational process of DNA repair. It may act with RecF and RecO. The chain is Recombination protein RecR from Campylobacter jejuni (strain RM1221).